A 386-amino-acid polypeptide reads, in one-letter code: Cell division protein FtsZ (386 aa).

GTP is bound by residues 20–24 (GGGGN), 107–109 (GTG), Glu-138, Arg-142, and Asn-186. The segment at 350 to 377 (LNQEQKTAAKAVNEQNAQGSKEPDYLDI) is disordered.

Belongs to the FtsZ family. In terms of assembly, homodimer. Polymerizes to form a dynamic ring structure in a strictly GTP-dependent manner. Interacts directly with several other division proteins.

The protein localises to the cytoplasm. Essential cell division protein that forms a contractile ring structure (Z ring) at the future cell division site. The regulation of the ring assembly controls the timing and the location of cell division. One of the functions of the FtsZ ring is to recruit other cell division proteins to the septum to produce a new cell wall between the dividing cells. Binds GTP and shows GTPase activity. This chain is Cell division protein FtsZ, found in Sodalis glossinidius.